The chain runs to 850 residues: MYSKKYTSFVIVLILSCIISTCTSNQISEDVGKAINQKLNENIEKVEDVVVQFENVANQVIEELKVEHQRQELLGEVKHDSLRDSATNYIWGLLDKIQSYLPKDNNKVSKVEEAFSSGQNNNIGSSIGDSTGASTSPQFQSINGLSGASQSSGSSTGGTGDSDSKTTNEAIIFSSKVSTTDRQESIIGQVAITAKDSLGATITGLGGVSSTAKVGGQITNGRAQGQVITGGDNTGTVGRGAVTTASSVANTVGEFLGGSRTGGSSSAGTVGNVISDSYTSIGKIASGNGNSLSETIGTTGDTLAHTFAGTDSVGVTGFHIITKTFNLIAGGKFNSDQQYIDKSYGSIPSQDNEEIKKRLQSAHQQLQEQSPAIYQSMKSEDLKNLDDEVIRNTLKEMQIQRENQDIGQQNQEDKEQLIDLQNREPGLYKNQQDLKQEKRANQQELINYELNLQEDQEQYELLLDQLYDEQQQQPQKVSNKQQLQEQQINSPEDIQYQLNHLNQPFQDDYHNDQTEELKDDDYNFNDQQINNGQFENNVEEFPDLNDANDNFEQVNNNNNNINNNNNNNFKVDKSKKSAQQVEIALENERLYLQEVEDAPERLYEEIHNSNLNKAVQEAEEIERQQNGNGSPAVNSHKIVTQMGNVENNEITNEQDAIEQAQHLQRIENGEDIDEYEAAQHEVAFLDENEQDAAKLQNEMDQLELLLEENEEEQFSNKNLQQLNENENQQQQQGQQQVQATNVEQQIVEQLKVIKEFQRQDQQKKQKIQQENDAVYLSDVEKAQLELDAELAKNNKQENQDENLVQEKQQSPDQIKNQLKNIQHEQQIQEQQDKLNQEKNQQLLEQEQNQK.

Positions 1–24 are cleaved as a signal peptide; that stretch reads MYSKKYTSFVIVLILSCIISTCTS. Residues 119–130 show a composition bias toward low complexity; that stretch reads QNNNIGSSIGDS. Disordered regions lie at residues 119-167 and 787-850; these read QNNN…SKTT and DAEL…QNQK. Residues 131–143 are compositionally biased toward polar residues; it reads TGASTSPQFQSIN. The segment covering 144 to 154 has biased composition (low complexity); it reads GLSGASQSSGS. Positions 787-798 are enriched in basic and acidic residues; that stretch reads DAELAKNNKQEN. The span at 801–820 shows a compositional bias: polar residues; that stretch reads ENLVQEKQQSPDQIKNQLKN. A compositionally biased stretch (low complexity) spans 837 to 850; that stretch reads EKNQQLLEQEQNQK.

The polypeptide is cAMP-inducible prespore protein D7 (D7) (Dictyostelium discoideum (Social amoeba)).